Reading from the N-terminus, the 183-residue chain is Threonylcarbamoyl-AMP synthase (183 aa).

Residues 1 to 183 (MNREQIADAL…LRTNQLFRQG (183 aa)) form the YrdC-like domain.

The protein belongs to the SUA5 family. TsaC subfamily.

The protein resides in the cytoplasm. The enzyme catalyses L-threonine + hydrogencarbonate + ATP = L-threonylcarbamoyladenylate + diphosphate + H2O. In terms of biological role, required for the formation of a threonylcarbamoyl group on adenosine at position 37 (t(6)A37) in tRNAs that read codons beginning with adenine. Catalyzes the conversion of L-threonine, HCO(3)(-)/CO(2) and ATP to give threonylcarbamoyl-AMP (TC-AMP) as the acyladenylate intermediate, with the release of diphosphate. This chain is Threonylcarbamoyl-AMP synthase, found in Haemophilus influenzae (strain ATCC 51907 / DSM 11121 / KW20 / Rd).